A 213-amino-acid polypeptide reads, in one-letter code: Methylthioribulose-1-phosphate dehydratase (213 aa).

Zn(2+)-binding residues include H104 and H106.

It belongs to the aldolase class II family. MtnB subfamily. Zn(2+) is required as a cofactor.

The catalysed reaction is 5-(methylsulfanyl)-D-ribulose 1-phosphate = 5-methylsulfanyl-2,3-dioxopentyl phosphate + H2O. It participates in amino-acid biosynthesis; L-methionine biosynthesis via salvage pathway; L-methionine from S-methyl-5-thio-alpha-D-ribose 1-phosphate: step 2/6. Its function is as follows. Catalyzes the dehydration of methylthioribulose-1-phosphate (MTRu-1-P) into 2,3-diketo-5-methylthiopentyl-1-phosphate (DK-MTP-1-P). The polypeptide is Methylthioribulose-1-phosphate dehydratase (Stenotrophomonas maltophilia (strain R551-3)).